A 134-amino-acid polypeptide reads, in one-letter code: MSGKAHGGKGKSGAKDSGSLRSQSSSARAGLQFPVGRIKRYLKRHATGRTRVGSKAAIYLTAVLEYLTAEVLELAGNAAKDLKVKRITPRHLQLAIRGDDELDSLIRATIASGGVLPHINKALLLKVEKKGSKK.

The tract at residues 1–31 (MSGKAHGGKGKSGAKDSGSLRSQSSSARAGL) is disordered. Residue Ser-2 is modified to N-acetylserine. 4 positions are modified to N6-acetyllysine: Lys-4, Lys-9, Lys-11, and Lys-15. Positions 15 to 31 (KDSGSLRSQSSSARAGL) are enriched in low complexity. Residues 98-108 (GDDELDSLIRA) form an interaction with VPS72 region.

It belongs to the histone H2A family. The nucleosome is a histone octamer containing two molecules each of H2A, H2B, H3 and H4 assembled in one H3-H4 heterotetramer and two H2A-H2B heterodimers. The octamer wraps approximately 147 bp of DNA. H2A or its variant H2A.Z forms a heterodimer with H2B. H2A.Z associates with the VPS72/SWC2 subunit of the SWR1 chromatin remodeling complex. Also interacts with RBP1/DNA-directed RNA polymerase II largest subunit. Interacts with NAP1. Interacts with MPS3. Post-translationally, acetylated by ESA1, a component of the NuA4 histone acetyltransferase (HAT) complex, and/or by GCN5, a component of the SAGA complex, to form H2A.ZK3Ac, H2A.ZK8Ac, H2A.ZK10Ac and H2A.ZK14Ac once deposited into chromatin. Acetylation is required for function at telomeres. H2A.ZK14Ac is acetylated at the promoters of active genes.

It localises to the nucleus. It is found in the chromosome. Functionally, variant histone H2A which can replace H2A in some nucleosomes. Nucleosomes wrap and compact DNA into chromatin, limiting DNA accessibility to the cellular machineries which require DNA as a template. Histones thereby play a central role in transcription regulation, DNA repair, DNA replication and chromosomal stability. DNA accessibility is regulated via a complex set of post-translational modifications of histones, also called histone code, and nucleosome remodeling. This variant is enriched at promoters, it may keep them in a repressed state until the appropriate activation signal is received. Near telomeres, it may counteract gene silencing caused by the spread of heterochromatin proteins. Required for the RNA polymerase II and SPT15/TBP recruitment to the target genes. Involved in chromosome stability. Required to target MPS3 to the inner membrane of the nuclear envelope. This is Histone H2A.Z from Saccharomyces cerevisiae (strain ATCC 204508 / S288c) (Baker's yeast).